Here is a 219-residue protein sequence, read N- to C-terminus: Phosphate-specific transport system accessory protein PhoU homolog (219 aa).

Belongs to the PhoU family. As to quaternary structure, homodimer.

It localises to the cytoplasm. Functionally, plays a role in the regulation of phosphate uptake. Encoded together with proteins of the phosphate-specific transport (Pst) system in the polycistronic pstSCAB-phoU operon. The chain is Phosphate-specific transport system accessory protein PhoU homolog from Clostridium acetobutylicum (strain ATCC 824 / DSM 792 / JCM 1419 / IAM 19013 / LMG 5710 / NBRC 13948 / NRRL B-527 / VKM B-1787 / 2291 / W).